A 503-amino-acid polypeptide reads, in one-letter code: MLEKLVDSLWKICRKSKFQHMTPIADAVDTFCFEPLHTPSSPPFVRDAVDVKRWMMLVVIALMPTIFAAVWNSGLQALVYQSSDPRIMEAFLHISGFKSYFSFVSQEIGIGSVLFAGCKIFLPLLFISYAVGGTCEVLFAIIRKHKIAEGLLVTGMLYPLILPPTIPYWMAALGIAFGVVMGKELFGGTGMNILNPALTGRAFLFFTFPAKMSGDVWVGSNPSRIKESLATMSSLAEKSHFDGFSQSTCLQVLNSTPPSVKRVHIDAIASNILNLEHVPTQDVLQTQFATWAESYPGLTVDQLSLEQLQNFVTTPITEGGLGLLPAHFDSACSLTEAVYGIGKFSTGNLFFGNILGSLGETSTVACLLGAGLLLLTGIASWRTMLSFGLSAFFFAWFFKIMSILTTGNAGAWAPAKFFIPAYRHLCIGGLAFGLVFMATDPVSSPAMKLAKWLYGAFIGFLTILIRLINPAYPEGVMLAILLGNVFAPLFDNIALKQYRQRRI.

Transmembrane regions (helical) follow at residues 55–75, 120–142, and 160–180; these read MMLV…NSGL, IFLP…FAII, and LILP…FGVV. The residue at position 248 (Thr-248) is an FMN phosphoryl threonine. The next 5 membrane-spanning stretches (helical) occupy residues 361-381, 384-404, 417-437, 452-472, and 475-495; these read TSTV…IASW, MLSF…MSIL, FFIP…LVFM, WLYG…NPAY, and GVML…NIAL.

This sequence belongs to the NqrB/RnfD family. As to quaternary structure, composed of six subunits; NqrA, NqrB, NqrC, NqrD, NqrE and NqrF. FMN serves as cofactor.

The protein localises to the cell inner membrane. It carries out the reaction a ubiquinone + n Na(+)(in) + NADH + H(+) = a ubiquinol + n Na(+)(out) + NAD(+). In terms of biological role, NQR complex catalyzes the reduction of ubiquinone-1 to ubiquinol by two successive reactions, coupled with the transport of Na(+) ions from the cytoplasm to the periplasm. NqrA to NqrE are probably involved in the second step, the conversion of ubisemiquinone to ubiquinol. The protein is Na(+)-translocating NADH-quinone reductase subunit B of Chlamydia trachomatis serovar A (strain ATCC VR-571B / DSM 19440 / HAR-13).